A 201-amino-acid polypeptide reads, in one-letter code: Peptide deformylase (201 aa).

Fe cation is bound by residues Cys121 and His163. Glu164 is an active-site residue. His167 lines the Fe cation pocket.

This sequence belongs to the polypeptide deformylase family. The cofactor is Fe(2+).

The catalysed reaction is N-terminal N-formyl-L-methionyl-[peptide] + H2O = N-terminal L-methionyl-[peptide] + formate. Its function is as follows. Removes the formyl group from the N-terminal Met of newly synthesized proteins. Requires at least a dipeptide for an efficient rate of reaction. N-terminal L-methionine is a prerequisite for activity but the enzyme has broad specificity at other positions. In Synechococcus sp. (strain CC9902), this protein is Peptide deformylase.